The chain runs to 362 residues: Probable branched-chain-amino-acid aminotransferase (362 aa).

K202 carries the N6-(pyridoxal phosphate)lysine modification.

It belongs to the class-IV pyridoxal-phosphate-dependent aminotransferase family. It depends on pyridoxal 5'-phosphate as a cofactor.

It carries out the reaction L-leucine + 2-oxoglutarate = 4-methyl-2-oxopentanoate + L-glutamate. The catalysed reaction is L-isoleucine + 2-oxoglutarate = (S)-3-methyl-2-oxopentanoate + L-glutamate. It catalyses the reaction L-valine + 2-oxoglutarate = 3-methyl-2-oxobutanoate + L-glutamate. Its pathway is amino-acid biosynthesis; L-isoleucine biosynthesis; L-isoleucine from 2-oxobutanoate: step 4/4. The protein operates within amino-acid biosynthesis; L-leucine biosynthesis; L-leucine from 3-methyl-2-oxobutanoate: step 4/4. It participates in amino-acid biosynthesis; L-valine biosynthesis; L-valine from pyruvate: step 4/4. In terms of biological role, acts on leucine, isoleucine and valine. This chain is Probable branched-chain-amino-acid aminotransferase (ilvE), found in Streptomyces coelicolor (strain ATCC BAA-471 / A3(2) / M145).